We begin with the raw amino-acid sequence, 249 residues long: Meiotic drive suppressor wtf25 (249 aa).

The segment at 1–40 is disordered; that stretch reads MKNNYTSLKSPLDEEDELKTDHEIDLEKGPLPEYDSEEEG. A compositionally biased stretch (basic and acidic residues) spans 19–30; it reads KTDHEIDLEKGP. 4 consecutive transmembrane segments (helical) span residues 73 to 93, 110 to 130, 151 to 170, and 187 to 207; these read LLII…PAFC, WTLF…LTYF, NMIF…LKAE, and SASA…AETV.

It belongs to the WTF family. Homomer. Interacts with other proteins that exhibit high sequence similarity.

It localises to the spore membrane. The protein localises to the vacuole membrane. Its function is as follows. Acts as a suppressor component of the dual wtf meiotic drive system, and can suppress but not confer meiotic drive by compatible poisons. Wtf meiotic drive systems promote unequal transmission of alleles from the parental zygote to progeny spores by encoding a poison and an antidote from the same locus; the poison is trans-acting and forms toxic aggregates in all spores within an ascus, wherease the antidote is spore-specific and targets aggregates for degradation by the vacuole. Meiotic drive by wtf systems therefore lead to poisoning of all progeny that do not inherit the dual poison/antidote allele, or express a compatible antidote. This is Meiotic drive suppressor wtf25 from Schizosaccharomyces pombe (strain 972 / ATCC 24843) (Fission yeast).